Reading from the N-terminus, the 227-residue chain is tRNA (guanine-N(1)-)-methyltransferase (227 aa).

S-adenosyl-L-methionine-binding positions include G107 and 127-132 (LGDFIL).

It belongs to the RNA methyltransferase TrmD family. Homodimer.

Its subcellular location is the cytoplasm. It carries out the reaction guanosine(37) in tRNA + S-adenosyl-L-methionine = N(1)-methylguanosine(37) in tRNA + S-adenosyl-L-homocysteine + H(+). Functionally, specifically methylates guanosine-37 in various tRNAs. The protein is tRNA (guanine-N(1)-)-methyltransferase of Mesomycoplasma hyopneumoniae (strain 232) (Mycoplasma hyopneumoniae).